Here is a 204-residue protein sequence, read N- to C-terminus: Dihydroorotase (204 aa).

Histidine 34 serves as a coordination point for Zn(2+). Leucine 79 provides a ligand contact to substrate. Residue aspartate 107 participates in Zn(2+) binding. Aspartate 107 is an active-site residue. The substrate site is built by histidine 111 and alanine 123.

It belongs to the metallo-dependent hydrolases superfamily. DHOase family. Class II DHOase subfamily. In terms of assembly, homodimer. It depends on Zn(2+) as a cofactor.

It carries out the reaction (S)-dihydroorotate + H2O = N-carbamoyl-L-aspartate + H(+). It participates in pyrimidine metabolism; UMP biosynthesis via de novo pathway; (S)-dihydroorotate from bicarbonate: step 3/3. Catalyzes the reversible cyclization of carbamoyl aspartate to dihydroorotate. This Serratia marcescens protein is Dihydroorotase.